Consider the following 199-residue polypeptide: Recombination protein RecR (199 aa).

The C4-type zinc-finger motif lies at Cys-57–Cys-72. The region spanning Ser-80–Ser-176 is the Toprim domain.

Belongs to the RecR family.

May play a role in DNA repair. It seems to be involved in an RecBC-independent recombinational process of DNA repair. It may act with RecF and RecO. This Lacticaseibacillus casei (strain BL23) (Lactobacillus casei) protein is Recombination protein RecR.